Consider the following 718-residue polypeptide: D-(-)-3-hydroxybutyrate oligomer hydrolase (718 aa).

S320 functions as the Charge relay system in the catalytic mechanism.

This sequence belongs to the D-(-)-3-hydroxybutyrate oligomer hydrolase family.

It localises to the cytoplasm. The enzyme catalyses (3R)-hydroxybutanoate dimer + H2O = 2 (R)-3-hydroxybutanoate + H(+). The protein operates within lipid metabolism; butanoate metabolism. Its activity is regulated as follows. Inhibited by diisopropylfluorophosphate (DFP). Functionally, participates in the degradation of poly-3-hydroxybutyrate (PHB). It works downstream of poly(3-hydroxybutyrate) depolymerase, hydrolyzing D(-)-3-hydroxybutyrate oligomers of various length (3HB-oligomers) into 3HB-monomers. Seems to have also poly(3-hydroxybutyrate) depolymerase activity since it is able to release 3HB-monomers from artificial amorphous PHB. The chain is D-(-)-3-hydroxybutyrate oligomer hydrolase (phaZ2) from Cupriavidus necator (strain ATCC 17699 / DSM 428 / KCTC 22496 / NCIMB 10442 / H16 / Stanier 337) (Ralstonia eutropha).